Reading from the N-terminus, the 264-residue chain is MRQYHNLMKEVLAKGVQKSDRTGTGTISVFGHQMRFNLADGFPMVTTKKLHMKSIVYELLWFLKGSTDNNWLKERGVSIWNEWAAPDGDLGPIYGYQWRSWPAPNGQHIDQISEVVETIKKNPDSRRIIVSAWNVADIPRMALAPCHAFFQFYVADGKLSCQLYQRSADIFLGVPFNIASYALLTHMVAQQCNLEVGDFIWTGGDCHLYSNHLEQVDLQLSRDFLPLPKLNILRKPDSLFDYEFEDFEIVGYESHPHIKAPVAI.

Residue Arg21 participates in dUMP binding. His51 serves as a coordination point for (6R)-5,10-methylene-5,6,7,8-tetrahydrofolate. DUMP is bound at residue 126-127 (RR). The Nucleophile role is filled by Cys146. DUMP is bound by residues 166–169 (RSAD), Asn177, and 207–209 (HLY). Asp169 provides a ligand contact to (6R)-5,10-methylene-5,6,7,8-tetrahydrofolate. A (6R)-5,10-methylene-5,6,7,8-tetrahydrofolate-binding site is contributed by Ala263.

This sequence belongs to the thymidylate synthase family. Bacterial-type ThyA subfamily. As to quaternary structure, homodimer.

The protein localises to the cytoplasm. It catalyses the reaction dUMP + (6R)-5,10-methylene-5,6,7,8-tetrahydrofolate = 7,8-dihydrofolate + dTMP. Its pathway is pyrimidine metabolism; dTTP biosynthesis. Functionally, catalyzes the reductive methylation of 2'-deoxyuridine-5'-monophosphate (dUMP) to 2'-deoxythymidine-5'-monophosphate (dTMP) while utilizing 5,10-methylenetetrahydrofolate (mTHF) as the methyl donor and reductant in the reaction, yielding dihydrofolate (DHF) as a by-product. This enzymatic reaction provides an intracellular de novo source of dTMP, an essential precursor for DNA biosynthesis. The chain is Thymidylate synthase from Polynucleobacter asymbioticus (strain DSM 18221 / CIP 109841 / QLW-P1DMWA-1) (Polynucleobacter necessarius subsp. asymbioticus).